A 264-amino-acid polypeptide reads, in one-letter code: uncharacterized protein (264 aa).

The first 23 residues, 1-23, serve as a signal peptide directing secretion; it reads MQQWNLTISNILIGLFFCFSAQA.

This is an uncharacterized protein from Shewanella oneidensis (strain ATCC 700550 / JCM 31522 / CIP 106686 / LMG 19005 / NCIMB 14063 / MR-1).